Consider the following 91-residue polypeptide: Large ribosomal subunit protein eL31 (91 aa).

It belongs to the eukaryotic ribosomal protein eL31 family.

In Pyrobaculum calidifontis (strain DSM 21063 / JCM 11548 / VA1), this protein is Large ribosomal subunit protein eL31.